The following is a 172-amino-acid chain: Sec-independent protein translocase protein TatB (172 aa).

A helical membrane pass occupies residues 1-21 (MFDIGWSELLVIGVVALIAIG).

This sequence belongs to the TatB family. In terms of assembly, the Tat system comprises two distinct complexes: a TatABC complex, containing multiple copies of TatA, TatB and TatC subunits, and a separate TatA complex, containing only TatA subunits. Substrates initially bind to the TatABC complex, which probably triggers association of the separate TatA complex to form the active translocon.

Its subcellular location is the cell inner membrane. Functionally, part of the twin-arginine translocation (Tat) system that transports large folded proteins containing a characteristic twin-arginine motif in their signal peptide across membranes. Together with TatC, TatB is part of a receptor directly interacting with Tat signal peptides. TatB may form an oligomeric binding site that transiently accommodates folded Tat precursor proteins before their translocation. The polypeptide is Sec-independent protein translocase protein TatB (Rhodopseudomonas palustris (strain BisB18)).